We begin with the raw amino-acid sequence, 182 residues long: MSIEEIPQGADVSIVPNKNEKKAKELIKKLGLKQIKGISRVTFKQRGNLIYAIDAPEVYRSQAGTYVVFGEAKVDDMNQRIAEAQAQQAQQEALQKAAADAGAAGDDKSPEAITADLEKASLQGGESNADAAEDDNEEVDETGINPKDIDLIVEQTRVSRGSAVKALKKHDGDMVNALMELS.

Residues 17 to 81 enclose the NAC-A/B domain; the sequence is NKNEKKAKEL…AKVDDMNQRI (65 aa). The tract at residues 120-148 is disordered; the sequence is ASLQGGESNADAAEDDNEEVDETGINPKD. The segment covering 131-141 has biased composition (acidic residues); the sequence is AAEDDNEEVDE. The 39-residue stretch at 144-182 folds into the UBA domain; sequence INPKDIDLIVEQTRVSRGSAVKALKKHDGDMVNALMELS.

It belongs to the NAC-alpha family. In terms of assembly, part of the nascent polypeptide-associated complex (NAC), consisting of EGD2 and EGD1. NAC associates with ribosomes via EGD1.

It is found in the cytoplasm. It localises to the nucleus. Component of the nascent polypeptide-associated complex (NAC), a dynamic component of the ribosomal exit tunnel, protecting the emerging polypeptides from interaction with other cytoplasmic proteins to ensure appropriate nascent protein targeting. The NAC complex also promotes mitochondrial protein import by enhancing productive ribosome interactions with the outer mitochondrial membrane and blocks the inappropriate interaction of ribosomes translating non-secretory nascent polypeptides with translocation sites in the membrane of the endoplasmic reticulum. EGD2 may also be involved in transcription regulation. The polypeptide is Nascent polypeptide-associated complex subunit alpha (EGD2) (Lodderomyces elongisporus (strain ATCC 11503 / CBS 2605 / JCM 1781 / NBRC 1676 / NRRL YB-4239) (Yeast)).